The chain runs to 361 residues: Hydroxyproline O-arabinosyltransferase PLENTY (361 aa).

The chain crosses the membrane as a helical; Signal-anchor span at residues 13-33 (LLMLLMVLGFFFATYNLVSMI).

The protein resides in the golgi apparatus membrane. The catalysed reaction is trans-4-hydroxy-L-prolyl-[protein] + UDP-beta-L-arabinofuranose = O-(beta-L-arabinofuranosyl)-trans-4-hydroxy-L-prolyl-[protein] + UDP + H(+). In terms of biological role, glycosyltransferase involved in the O-arabinosylation of several proteins including extensins and small signaling peptides. Catalyzes the transfer of the initial L-arabinose to the hydroxyl group of Hyp residues. Probably involved in the arabinosylation of CLAVATA3/ESR-related (CLE) signaling peptides that move from root to shoot, to interact with receptor kinase signaling that regulates nodulation. Involved in long distance nodulation signaling events. Involved in the autoregulation of nodulation (AON), a long distance systemic signaling from root to shoot and back again, which allows legumes to limit the number of root nodules formed based on available nitrogen and previous rhizobial colonization. In Lotus japonicus (Lotus corniculatus var. japonicus), this protein is Hydroxyproline O-arabinosyltransferase PLENTY.